The sequence spans 428 residues: Adenylosuccinate synthetase (428 aa).

Residues 12-18 (GDEGKGK) and 40-42 (GHT) each bind GTP. Aspartate 13 (proton acceptor) is an active-site residue. Positions 13 and 40 each coordinate Mg(2+). Residues 13-16 (DEGK), 38-41 (NAGH), threonine 128, arginine 142, glutamine 223, threonine 238, and arginine 302 each bind IMP. The active-site Proton donor is the histidine 41. 298–304 (TTTGRPR) is a substrate binding site. GTP is bound by residues arginine 304, 330–332 (KLD), and 412–414 (SVG).

This sequence belongs to the adenylosuccinate synthetase family. As to quaternary structure, homodimer. The cofactor is Mg(2+).

The protein resides in the cytoplasm. The enzyme catalyses IMP + L-aspartate + GTP = N(6)-(1,2-dicarboxyethyl)-AMP + GDP + phosphate + 2 H(+). It participates in purine metabolism; AMP biosynthesis via de novo pathway; AMP from IMP: step 1/2. Its function is as follows. Plays an important role in the de novo pathway of purine nucleotide biosynthesis. Catalyzes the first committed step in the biosynthesis of AMP from IMP. In Brevibacillus brevis (strain 47 / JCM 6285 / NBRC 100599), this protein is Adenylosuccinate synthetase.